The following is a 63-amino-acid chain: Large ribosomal subunit protein uL29 (63 aa).

The protein belongs to the universal ribosomal protein uL29 family.

In Marinomonas sp. (strain MWYL1), this protein is Large ribosomal subunit protein uL29.